The primary structure comprises 95 residues: Small ribosomal subunit protein bS6 (95 aa).

The protein belongs to the bacterial ribosomal protein bS6 family.

Its function is as follows. Binds together with bS18 to 16S ribosomal RNA. The protein is Small ribosomal subunit protein bS6 (rpsF) of Halalkalibacterium halodurans (strain ATCC BAA-125 / DSM 18197 / FERM 7344 / JCM 9153 / C-125) (Bacillus halodurans).